A 541-amino-acid polypeptide reads, in one-letter code: Protein wntless homolog (541 aa).

Residues 1–15 (MAGAIIENMSTKKLC) are Cytoplasmic-facing. A helical transmembrane segment spans residues 16–36 (IVGGILLVFQIIAFLVGGLIA). The Lumenal segment spans residues 37–232 (PGPTTAVSYM…GIHQNGGFTK (196 aa)). The interval 101 to 232 (MEMSPWFQFM…GIHQNGGFTK (132 aa)) is interaction with Wnt proteins. The chain crosses the membrane as a helical span at residues 233-253 (VWFAMKTFLTPSIFIIMVWYW). The Cytoplasmic portion of the chain corresponds to 254–268 (RRITMMSRPPVLLEK). The chain crosses the membrane as a helical span at residues 269-289 (VIFALGISMTFINIPVEWFSI). The Lumenal segment spans residues 290-303 (GFDWTWMLLFGDIR). The chain crosses the membrane as a helical span at residues 304–324 (QGIFYAMLLSFWIIFCGEHMM). At 325–331 (DQHERNH) the chain is on the cytoplasmic side. The chain crosses the membrane as a helical span at residues 332–352 (IAGYWKQVGPIAVGSFCLFIF). The Lumenal portion of the chain corresponds to 353 to 380 (DMCERGVQLTNPFYSIWTTDIGTELAMA). Residues 381 to 401 (FIIVAGICLCLYFLFLCFMVF) form a helical membrane-spanning segment. Topologically, residues 402 to 431 (QVFRNISGKQSSLPAMSKVRRLHYEGLIFR) are cytoplasmic. The chain crosses the membrane as a helical span at residues 432 to 452 (FKFLMLITLACAAMTVIFFIV). The Lumenal portion of the chain corresponds to 453–471 (SQVTEGHWKWGGVTVQVNS). Residues 472 to 492 (AFFTGIYGMWNLYVFALMFLY) traverse the membrane as a helical segment. The Cytoplasmic portion of the chain corresponds to 493-541 (APSHKNYGEDQSNGDLGVHSGEELQLTTTITHVDGPTEIYKLTRKEAQE).

It belongs to the wntless family. Interacts with WNT3A. Interacts with WNT1, WNT3 and WNT5A. Post-translationally, N-glycosylated.

The protein localises to the golgi apparatus membrane. Its subcellular location is the cytoplasmic vesicle membrane. The protein resides in the cell membrane. It localises to the endoplasmic reticulum membrane. It is found in the early endosome membrane. Its function is as follows. Regulates Wnt proteins sorting and secretion in a feedback regulatory mechanism. This reciprocal interaction plays a key role in the regulation of expression, subcellular location, binding and organelle-specific association of Wnt proteins. Plays also an important role in establishment of the anterior-posterior body axis formation during development. This chain is Protein wntless homolog (WLS), found in Homo sapiens (Human).